The chain runs to 626 residues: UvrABC system protein C (626 aa).

Residues 25–104 form the GIY-YIG domain; the sequence is TSPGVYRFSN…IKELKPRYNV (80 aa). The UVR domain maps to 218–253; it reads SALLRDLSAEMQKKAKELKFEEAAALKAQIEGLKRY.

Belongs to the UvrC family. As to quaternary structure, interacts with UvrB in an incision complex.

It localises to the cytoplasm. Its function is as follows. The UvrABC repair system catalyzes the recognition and processing of DNA lesions. UvrC both incises the 5' and 3' sides of the lesion. The N-terminal half is responsible for the 3' incision and the C-terminal half is responsible for the 5' incision. This is UvrABC system protein C from Chlorobaculum tepidum (strain ATCC 49652 / DSM 12025 / NBRC 103806 / TLS) (Chlorobium tepidum).